The chain runs to 236 residues: Endonuclease V (236 aa).

The Mg(2+) site is built by aspartate 47 and aspartate 115.

Belongs to the endonuclease V family. Requires Mg(2+) as cofactor.

Its subcellular location is the cytoplasm. It carries out the reaction Endonucleolytic cleavage at apurinic or apyrimidinic sites to products with a 5'-phosphate.. Functionally, DNA repair enzyme involved in the repair of deaminated bases. Selectively cleaves double-stranded DNA at the second phosphodiester bond 3' to a deoxyinosine leaving behind the intact lesion on the nicked DNA. This chain is Endonuclease V, found in Xanthomonas campestris pv. campestris (strain B100).